Consider the following 600-residue polypeptide: Proline--tRNA ligase (600 aa).

Belongs to the class-II aminoacyl-tRNA synthetase family. ProS type 1 subfamily. Homodimer.

The protein localises to the cytoplasm. The enzyme catalyses tRNA(Pro) + L-proline + ATP = L-prolyl-tRNA(Pro) + AMP + diphosphate. Functionally, catalyzes the attachment of proline to tRNA(Pro) in a two-step reaction: proline is first activated by ATP to form Pro-AMP and then transferred to the acceptor end of tRNA(Pro). As ProRS can inadvertently accommodate and process non-cognate amino acids such as alanine and cysteine, to avoid such errors it has two additional distinct editing activities against alanine. One activity is designated as 'pretransfer' editing and involves the tRNA(Pro)-independent hydrolysis of activated Ala-AMP. The other activity is designated 'posttransfer' editing and involves deacylation of mischarged Ala-tRNA(Pro). The misacylated Cys-tRNA(Pro) is not edited by ProRS. This chain is Proline--tRNA ligase, found in Prochlorococcus marinus (strain MIT 9211).